The primary structure comprises 99 residues: Acylphosphatase-1 (99 aa).

Ala2 bears the N-acetylalanine mark. An Acylphosphatase-like domain is found at 9-99 (SVDYEIFGKV…LDYSDFQIVK (91 aa)). Residues Arg24 and Asn42 contribute to the active site.

This sequence belongs to the acylphosphatase family.

The enzyme catalyses an acyl phosphate + H2O = a carboxylate + phosphate + H(+). This chain is Acylphosphatase-1 (Acyp1), found in Mus musculus (Mouse).